We begin with the raw amino-acid sequence, 625 residues long: TRAF3-interacting protein 1 (625 aa).

The tract at residues 1-322 (MNAAVVRRTQ…RKLSDGSFKD (322 aa)) is abolishes microtubules binding when missing. Residues 130–439 (AGDKGDSRGR…DSQNSDNEDD (310 aa)) form a disordered region. The segment covering 141 to 152 (QRTSKAQEPNNK) has biased composition (polar residues). A compositionally biased stretch (basic and acidic residues) spans 153–327 (SGKEEESRIH…GSFKDVKAEM (175 aa)). The DISC1-interaction domain stretch occupies residues 229–625 (RAKDRDRNNR…VHSINLSSRR (397 aa)). Phosphoserine occurs at positions 316 and 409. Residues 420 to 434 (SGKTVSSVIIDSQNS) show a composition bias toward polar residues. Residues 472–600 (GLVKKILETK…IRDQQDKICA (129 aa)) adopt a coiled-coil conformation.

Belongs to the TRAF3IP1 family. As to quaternary structure, interacts with IL13RA1. Binds to microtubules, TRAF3 and DISC1. Component of the IFT complex B, at least composed of IFT20, IFT22, IFT25, IFT27, IFT46, IFT52, TRAF3IP1/IFT54, IFT57, IFT74, IFT80, IFT81, and IFT88. Interacts with IFT88. Interacts with MAP4.

The protein localises to the cytoplasm. It is found in the cytoskeleton. It localises to the cell projection. The protein resides in the cilium. Its subcellular location is the cilium axoneme. The protein localises to the cilium basal body. In terms of biological role, plays an inhibitory role on IL13 signaling by binding to IL13RA1. Involved in suppression of IL13-induced STAT6 phosphorylation, transcriptional activity and DNA-binding. Recruits TRAF3 and DISC1 to the microtubules. Involved in epithelial morphogenesis and in the regulation of microtubule cytoskeleton organization. Is a negative regulator of microtubule stability, acting through the control of MAP4 levels. Involved in ciliogenesis. The sequence is that of TRAF3-interacting protein 1 (Traf3ip1) from Mus musculus (Mouse).